Reading from the N-terminus, the 156-residue chain is Small ribosomal subunit protein uS7 (156 aa).

This sequence belongs to the universal ribosomal protein uS7 family. Part of the 30S ribosomal subunit. Contacts proteins S9 and S11.

Functionally, one of the primary rRNA binding proteins, it binds directly to 16S rRNA where it nucleates assembly of the head domain of the 30S subunit. Is located at the subunit interface close to the decoding center, probably blocks exit of the E-site tRNA. This is Small ribosomal subunit protein uS7 from Streptococcus pyogenes serotype M12 (strain MGAS2096).